A 252-amino-acid polypeptide reads, in one-letter code: 2-succinyl-6-hydroxy-2,4-cyclohexadiene-1-carboxylate synthase (252 aa).

This sequence belongs to the AB hydrolase superfamily. MenH family. In terms of assembly, monomer.

It catalyses the reaction 5-enolpyruvoyl-6-hydroxy-2-succinyl-cyclohex-3-ene-1-carboxylate = (1R,6R)-6-hydroxy-2-succinyl-cyclohexa-2,4-diene-1-carboxylate + pyruvate. It participates in quinol/quinone metabolism; 1,4-dihydroxy-2-naphthoate biosynthesis; 1,4-dihydroxy-2-naphthoate from chorismate: step 3/7. It functions in the pathway quinol/quinone metabolism; menaquinone biosynthesis. Functionally, catalyzes a proton abstraction reaction that results in 2,5-elimination of pyruvate from 2-succinyl-5-enolpyruvyl-6-hydroxy-3-cyclohexene-1-carboxylate (SEPHCHC) and the formation of 2-succinyl-6-hydroxy-2,4-cyclohexadiene-1-carboxylate (SHCHC). This Shigella boydii serotype 4 (strain Sb227) protein is 2-succinyl-6-hydroxy-2,4-cyclohexadiene-1-carboxylate synthase.